The following is a 1424-amino-acid chain: Putative disease resistance protein At3g14460 (1424 aa).

The 303-residue stretch at 152 to 454 folds into the NB-ARC domain; it reads WRQASRSRPD…AIDLLYQPRS (303 aa). 200–207 serves as a coordination point for ATP; the sequence is GMPGVGKT. 7 LRR repeats span residues 498 to 523, 552 to 571, 572 to 595, 597 to 618, 620 to 641, 642 to 665, and 806 to 830; these read VSGD…HFSF, PTSL…LLNA, LSGL…LKGL, LLRY…VCTL, NLQT…SIAE, LINL…IKKL, and LPSL…FFFG. 2 disordered regions span residues 911–977 and 1050–1070; these read FRRS…PKDR and IKSS…QYDD. Composition is skewed to polar residues over residues 912 to 927 and 934 to 972; these read RRSL…SIPS and SSPT…SLSS. 5 LRR repeats span residues 1090–1114, 1118–1139, 1238–1262, 1264–1286, and 1310–1336; these read PQNL…LTES, LHEL…HPPT, TPKL…LFGL, SLLS…GFPS, and LENL…LLPK.

Belongs to the disease resistance NB-LRR family.

Functionally, potential disease resistance protein. This Arabidopsis thaliana (Mouse-ear cress) protein is Putative disease resistance protein At3g14460.